The following is a 242-amino-acid chain: Uridylate kinase (242 aa).

8–11 (KFSG) provides a ligand contact to ATP. Gly-50 contacts UMP. 2 residues coordinate ATP: Gly-51 and Arg-55. Residues Asp-71 and 132 to 139 (TGNPFFTT) each bind UMP. ATP-binding residues include Thr-159, Tyr-165, and Asp-168.

This sequence belongs to the UMP kinase family. In terms of assembly, homohexamer.

It is found in the cytoplasm. The catalysed reaction is UMP + ATP = UDP + ADP. The protein operates within pyrimidine metabolism; CTP biosynthesis via de novo pathway; UDP from UMP (UMPK route): step 1/1. Inhibited by UTP. Catalyzes the reversible phosphorylation of UMP to UDP. This Nitratiruptor sp. (strain SB155-2) protein is Uridylate kinase.